The primary structure comprises 354 residues: UDP-3-O-acylglucosamine N-acyltransferase (354 aa).

The Proton acceptor role is filled by histidine 245.

Belongs to the transferase hexapeptide repeat family. LpxD subfamily. In terms of assembly, homotrimer.

The enzyme catalyses a UDP-3-O-[(3R)-3-hydroxyacyl]-alpha-D-glucosamine + a (3R)-hydroxyacyl-[ACP] = a UDP-2-N,3-O-bis[(3R)-3-hydroxyacyl]-alpha-D-glucosamine + holo-[ACP] + H(+). Its pathway is bacterial outer membrane biogenesis; LPS lipid A biosynthesis. Catalyzes the N-acylation of UDP-3-O-acylglucosamine using 3-hydroxyacyl-ACP as the acyl donor. Is involved in the biosynthesis of lipid A, a phosphorylated glycolipid that anchors the lipopolysaccharide to the outer membrane of the cell. This Anaeromyxobacter dehalogenans (strain 2CP-C) protein is UDP-3-O-acylglucosamine N-acyltransferase.